A 305-amino-acid polypeptide reads, in one-letter code: Protein ORANGE, chloroplastic (305 aa).

A chloroplast-targeting transit peptide spans 1-54 (MSCLGRILSVSYPPDPYGSRLSVSKLSSPGRNRRLRWRFTALDSDSSSLDSDSS). Transmembrane regions (helical) follow at residues 144-164 (VYYATCFSLIAGIILFGGLLA) and 197-217 (IVASFSGGAVGVISALMVVEV). Residues 206–297 (VGVISALMVV…CTGMAMASEH (92 aa)) are CR-type-like. The CXXCXGXG motif repeat unit spans residues 228–235 (CKYCLGTG). One copy of the CXXCXXXG motif repeat lies at 239-246 (CARCSSTG). A CXXCXGXG motif repeat occupies 272-279 (CSNCSGAG). The CXXCXXXG motif repeat unit spans residues 283-290 (CPTCLCTG).

This sequence belongs to the orange-like family. As to quaternary structure, interacts with ERF1-2. As to expression, expressed in young leaves, curds and flower buds.

It is found in the plastid. The protein localises to the chloroplast membrane. It localises to the nucleus. Functionally, involved in chromoplast differentiation. Is associated with a cellular process that triggers the differentiation of pro-plastids or other non-colored plastids into chromoplasts for carotenoid accumulation. Associated with carotenoid accumulation in de-etiolated cotyledons. Controls leaf petiole elongation by suppressing the expression of ERF1 genes. This chain is Protein ORANGE, chloroplastic, found in Brassica oleracea var. botrytis (Cauliflower).